We begin with the raw amino-acid sequence, 1207 residues long: MPQFTKEQQQAIDDRGHDILVSASAGSGKTTVLVERVLKEIISGTQVSELLVVTFTKAAAEEMKTRIKTALTKELAKPGVNRKYLREQLNQVDTANISTIDAFCLEVIRRFYYSVNLNPSFKILTDETQAALIKERALREIEAESLTDENSGIRYFYDNFAGDRDANSPRDLLLDLYNFAMAKPEYRSWLKNLAKIYEVNNNIVKSKLWQNQIKSYLLNTFVSLQKKIEEYLNNPTIETKELAKVKEDFSLFTQNLDKFIDAIKNDEDYDQQRNLLRLCKFEVKYRKSAKWDEDIQEFYAETQKLKSEAKSQIFDIFTAFYATDEKEQTRIMQESQKIVSAISKAELALIDRFNELKRNENFLDYSDMEQLAYQILSADTSNSQMAREFYQNKFKEILIDEYQDINALQERIIQQVKNTDKNTLFMVGDVKQSIYGFRQAEPSLFLKKYHGFASEENKHEKRILLSDNFRSTEPVTKTVNQLFKSILSSDFGGIDYSKEGQLIFGAKYYPDALPKASEIIVHKKQKDIDNDNNGIDFSEVEMVLARIKQLKKEHFQVLDSTTGEVRALKYSDIAILTRSHGDNLEIMQEFAKRDIPLFITDAENYFQTFELTVIMNYLKIIDNPDQDIPLVTVLRSPLFNFSEKDLAKIRINSKNSGFYSAVASYVGIGDELSDRCKNFLNKLDELRKFATTHRISELIWSIYAQTNLLEIMTGLPNGEQRRINLEALYERASSYESAGFKGLYQFINFINRMRRSQKDLAQPLLSKEAGNAVRLMTIHGSKGLEFPVVFYLGMQHQYQLRDLKGNYVINPDSLGITLRQEHYRVDSLVKAIGNVTKKRQLLEEEARVLYVALTRAKQKLILVGDIANLDKKVQDWSIELDQSGQLSLADKLSVTNPLGFMGPALAFDKHIVINMNDISNALDQSQSVLYVEYKDSDNFEFKKDEDKVVGDSKNNNYTMDKLISTTKKLYQFDYPFKDASETTAYQAVSEIKKAFNDPIETELENSRLLSSTNRYLQPIDTKPNFLYQTKFTGAEIGTATHLILQYYDYTGDGSEKQLDYEIEELIKQKKLNPDIVPSLHKDQIQWFVHSSFAKSFWKNPENLQREVDFSSLISAKNLFKDFSDANAKILVHGTIDGYFVSNDGIILFDYKTDHVNKSYLDKSINLIKEKYTGQLRLYEQAINEFGEEKVIGKYLILLDAKQVVEVK.

Positions 2-472 constitute a UvrD-like helicase ATP-binding domain; it reads PQFTKEQQQA…ILLSDNFRST (471 aa). 23-30 serves as a coordination point for ATP; the sequence is ASAGSGKT. Residues 492–783 form the UvrD-like helicase C-terminal domain; that stretch reads GGIDYSKEGQ…RLMTIHGSKG (292 aa).

The protein belongs to the helicase family. AddA subfamily. As to quaternary structure, heterodimer of AddA and AddB/RexB. It depends on Mg(2+) as a cofactor.

It catalyses the reaction Couples ATP hydrolysis with the unwinding of duplex DNA by translocating in the 3'-5' direction.. It carries out the reaction ATP + H2O = ADP + phosphate + H(+). Functionally, the heterodimer acts as both an ATP-dependent DNA helicase and an ATP-dependent, dual-direction single-stranded exonuclease. Recognizes the chi site generating a DNA molecule suitable for the initiation of homologous recombination. The AddA nuclease domain is required for chi fragment generation; this subunit has the helicase and 3' -&gt; 5' nuclease activities. The sequence is that of ATP-dependent helicase/nuclease subunit A from Lactobacillus acidophilus (strain ATCC 700396 / NCK56 / N2 / NCFM).